The following is a 109-amino-acid chain: Putative double-stranded DNA mimic protein YciU (109 aa).

This sequence belongs to the putative dsDNA mimic protein family.

May act as a double-stranded DNA (dsDNA) mimic. Probably regulates the activity of a dsDNA-binding protein. This is Putative double-stranded DNA mimic protein YciU from Salmonella arizonae (strain ATCC BAA-731 / CDC346-86 / RSK2980).